Consider the following 220-residue polypeptide: 5-hmdU DNA kinase 1 (220 aa).

This sequence belongs to the thymidylate kinase family. 5-hmdU DNA kinase subfamily.

It carries out the reaction 5-hydroxymethyl-dUMP in DNA + ATP = 5-phosphomethyl-dUMP in DNA + ADP + H(+). In terms of biological role, phosphorylates 5-hydroxymethyluracil (5hmdU) into 5-phosphomethyl-2'-deoxyuridine (5- PmdU) on DNA as a step in the pathway leading to thymidine hypermodifications in the viral genome. The phosphate is added internally to the DNA polymer. As a final result of the pathway of hypermodification, 5-aminoethoxy-2'-deoxymethyluridine (5-NeOmdU) substitutes for about 40% of the thymidines in the viral DNA. These modifications probably prevent degradation of viral genome by the host restriction-modification antiviral defense system. The polypeptide is 5-hmdU DNA kinase 1 (Salmonella phage ViI).